The sequence spans 237 residues: Small ribosomal subunit protein eS4 (237 aa).

The S4 RNA-binding domain occupies 37-100; that stretch reads IPLAVLLRDV…NEYYRIIPDP (64 aa).

The protein belongs to the eukaryotic ribosomal protein eS4 family.

The chain is Small ribosomal subunit protein eS4 from Caldivirga maquilingensis (strain ATCC 700844 / DSM 13496 / JCM 10307 / IC-167).